We begin with the raw amino-acid sequence, 337 residues long: Ferredoxin--NADP reductase (337 aa).

Residues D33, Q41, Y46, A86, F120, D286, and T327 each coordinate FAD.

Belongs to the ferredoxin--NADP reductase type 2 family. In terms of assembly, homodimer. It depends on FAD as a cofactor.

The enzyme catalyses 2 reduced [2Fe-2S]-[ferredoxin] + NADP(+) + H(+) = 2 oxidized [2Fe-2S]-[ferredoxin] + NADPH. The polypeptide is Ferredoxin--NADP reductase (Rickettsia canadensis (strain McKiel)).